Consider the following 240-residue polypeptide: Biosynthetic peptidoglycan transglycosylase (240 aa).

The helical transmembrane segment at 15–35 (WMFYLGAVVAIAWLATQAFYF) threads the bilayer.

The protein belongs to the glycosyltransferase 51 family.

The protein resides in the cell inner membrane. It catalyses the reaction [GlcNAc-(1-&gt;4)-Mur2Ac(oyl-L-Ala-gamma-D-Glu-L-Lys-D-Ala-D-Ala)](n)-di-trans,octa-cis-undecaprenyl diphosphate + beta-D-GlcNAc-(1-&gt;4)-Mur2Ac(oyl-L-Ala-gamma-D-Glu-L-Lys-D-Ala-D-Ala)-di-trans,octa-cis-undecaprenyl diphosphate = [GlcNAc-(1-&gt;4)-Mur2Ac(oyl-L-Ala-gamma-D-Glu-L-Lys-D-Ala-D-Ala)](n+1)-di-trans,octa-cis-undecaprenyl diphosphate + di-trans,octa-cis-undecaprenyl diphosphate + H(+). Its pathway is cell wall biogenesis; peptidoglycan biosynthesis. Peptidoglycan polymerase that catalyzes glycan chain elongation from lipid-linked precursors. This Paraburkholderia xenovorans (strain LB400) protein is Biosynthetic peptidoglycan transglycosylase.